The chain runs to 426 residues: Serine--tRNA ligase (426 aa).

233-235 serves as a coordination point for L-serine; the sequence is TAE. Residue 264–266 participates in ATP binding; sequence RSE. Glu-287 lines the L-serine pocket. 351–354 serves as a coordination point for ATP; it reads EISS. Residue Ser-387 participates in L-serine binding.

It belongs to the class-II aminoacyl-tRNA synthetase family. Type-1 seryl-tRNA synthetase subfamily. As to quaternary structure, homodimer. The tRNA molecule binds across the dimer.

It localises to the cytoplasm. The enzyme catalyses tRNA(Ser) + L-serine + ATP = L-seryl-tRNA(Ser) + AMP + diphosphate + H(+). The catalysed reaction is tRNA(Sec) + L-serine + ATP = L-seryl-tRNA(Sec) + AMP + diphosphate + H(+). It participates in aminoacyl-tRNA biosynthesis; selenocysteinyl-tRNA(Sec) biosynthesis; L-seryl-tRNA(Sec) from L-serine and tRNA(Sec): step 1/1. Functionally, catalyzes the attachment of serine to tRNA(Ser). Is also able to aminoacylate tRNA(Sec) with serine, to form the misacylated tRNA L-seryl-tRNA(Sec), which will be further converted into selenocysteinyl-tRNA(Sec). The chain is Serine--tRNA ligase from Clostridium botulinum (strain 657 / Type Ba4).